Reading from the N-terminus, the 416-residue chain is Enolase (416 aa).

(2R)-2-phosphoglycerate is bound at residue glutamine 156. The active-site Proton donor is glutamate 200. Aspartate 236, glutamate 281, and aspartate 308 together coordinate Mg(2+). Residues lysine 333, arginine 362, serine 363, and lysine 384 each coordinate (2R)-2-phosphoglycerate. The active-site Proton acceptor is the lysine 333.

This sequence belongs to the enolase family. Mg(2+) serves as cofactor.

The protein localises to the cytoplasm. Its subcellular location is the secreted. It is found in the cell surface. It catalyses the reaction (2R)-2-phosphoglycerate = phosphoenolpyruvate + H2O. The protein operates within carbohydrate degradation; glycolysis; pyruvate from D-glyceraldehyde 3-phosphate: step 4/5. Catalyzes the reversible conversion of 2-phosphoglycerate (2-PG) into phosphoenolpyruvate (PEP). It is essential for the degradation of carbohydrates via glycolysis. The sequence is that of Enolase from Methanothermobacter thermautotrophicus (strain ATCC 29096 / DSM 1053 / JCM 10044 / NBRC 100330 / Delta H) (Methanobacterium thermoautotrophicum).